A 132-amino-acid chain; its full sequence is Fertilization-influencing membrane protein (132 aa).

A helical membrane pass occupies residues 100–120 (PGLFHHILVGLLVVAFFFLLF).

Testis-specific.

Its subcellular location is the cell membrane. In terms of biological role, may play a role in sperm-oocyte fusion during fertilization. The chain is Fertilization-influencing membrane protein from Homo sapiens (Human).